The following is a 332-amino-acid chain: Putative pumilio homolog 17 (332 aa).

Residues 1-302 (MTNINRLSMS…ILTADLFYSL (302 aa)) enclose the PUM-HD domain. One copy of the Pumilio 1 repeat lies at 82-117 (SDSDYFMVITRNKNGSKSLQKLMRMSDDMDVFFFVA). One copy of the Pumilio 2; degenerate repeat lies at 118–152 (IMRLFIHVMIDKYASYVAIQGMRIFKQDKRELMYD). Pumilio repeat units lie at residues 153 to 188 (HILR…DELM), 189 to 225 (DIVS…NIAD), 226 to 264 (KLCG…DLLA), and 265 to 300 (CKTE…DLFY).

The protein resides in the cytoplasm. In terms of biological role, sequence-specific RNA-binding protein that regulates translation and mRNA stability by binding the 3'-UTR of target mRNAs. In Arabidopsis thaliana (Mouse-ear cress), this protein is Putative pumilio homolog 17 (APUM17).